Consider the following 378-residue polypeptide: uncharacterized protein (378 aa).

This is an uncharacterized protein from Escherichia coli (strain K12).